Here is a 424-residue protein sequence, read N- to C-terminus: MSLIEDARRGVVTEEMRIVAAAEGVTEDFVRRGVAEGHIVIPVSPYRRVKICGIGEGLRTKVNASIGTSTDMVDVDMEVEKVRQAERAGADTLMELSTGGDFLEIRRRVVEATTLSVGSVPLYQAFIEAARKRGAVVHMEPDDLFRITAEQAKLGTNFMAIHTGINYETMKRLQNQGRHGGLVSRGGAFMTAWMLHNEKENPLYSEFDYLLEILKEHEVTLSFGNGMRAGAVHDATDRAQVQELLINAELADKAHEQGVQTIIEGPGHIPVDEIQTNVVLQKRVTNRRPFYMLGPLVTDIAPGYDDRVAAIGAALSSSYGADFICYVTPAEHLALPTPEEVYEGVMSSRIAAHVGDMIKLKKRDADLEMGHARRDLDWERQFAVAMNPERARAIRDERMPADTDGCTMCGDYCALKIVGRHFNF.

Residues methionine 94, tyrosine 123, histidine 162, 184-186 (SRG), 225-228 (NGMR), and glutamate 264 contribute to the substrate site. Residue histidine 268 coordinates Zn(2+). Tyrosine 291 contributes to the substrate binding site. Histidine 332 lines the Zn(2+) pocket. [4Fe-4S] cluster is bound by residues cysteine 406, cysteine 409, and cysteine 413.

The protein belongs to the ThiC family. The cofactor is [4Fe-4S] cluster.

The enzyme catalyses 5-amino-1-(5-phospho-beta-D-ribosyl)imidazole + S-adenosyl-L-methionine = 4-amino-2-methyl-5-(phosphooxymethyl)pyrimidine + CO + 5'-deoxyadenosine + formate + L-methionine + 3 H(+). Its pathway is cofactor biosynthesis; thiamine diphosphate biosynthesis. In terms of biological role, catalyzes the synthesis of the hydroxymethylpyrimidine phosphate (HMP-P) moiety of thiamine from aminoimidazole ribotide (AIR) in a radical S-adenosyl-L-methionine (SAM)-dependent reaction. The sequence is that of Phosphomethylpyrimidine synthase from Methanoculleus marisnigri (strain ATCC 35101 / DSM 1498 / JR1).